A 1173-amino-acid chain; its full sequence is Eukaryotic translation initiation factor 3 subunit A (1173 aa).

Residues 319–502 (LQRMAAHVLL…NSIYFGTDLT (184 aa)) enclose the PCI domain. Disordered stretches follow at residues 589–613 (QNNA…LAEQ) and 836–1173 (AAEA…PVQL). Composition is skewed to basic and acidic residues over residues 836 to 900 (AAEA…RGGD), 925 to 1011 (DRNE…EPDS), 1028 to 1081 (SRDD…DAAP), and 1090 to 1125 (DAPR…RAPK). A compositionally biased stretch (gly residues) spans 1128 to 1142 (GPSGGTGTAAGGGGN). The segment covering 1149–1165 (PRDEPAPKRDQPQDKGK) has biased composition (basic and acidic residues).

The protein belongs to the eIF-3 subunit A family. As to quaternary structure, component of the eukaryotic translation initiation factor 3 (eIF-3) complex. The eIF-3 complex interacts with pix.

It is found in the cytoplasm. Its function is as follows. RNA-binding component of the eukaryotic translation initiation factor 3 (eIF-3) complex, which is involved in protein synthesis of a specialized repertoire of mRNAs and, together with other initiation factors, stimulates binding of mRNA and methionyl-tRNAi to the 40S ribosome. The eIF-3 complex specifically targets and initiates translation of a subset of mRNAs involved in cell proliferation. The protein is Eukaryotic translation initiation factor 3 subunit A of Drosophila persimilis (Fruit fly).